Reading from the N-terminus, the 380-residue chain is Flap endonuclease 1 (380 aa).

The tract at residues 1-104 is N-domain; the sequence is MGIQGLAKLI…GELAKRAERR (104 aa). Position 34 (Asp-34) interacts with Mg(2+). Residues Arg-47 and Arg-70 each contribute to the DNA site. Mg(2+)-binding residues include Asp-86, Glu-158, Glu-160, Asp-179, and Asp-181. The I-domain stretch occupies residues 122–253; that stretch reads DVNKFQKRLV…KRAIELIRQY (132 aa). Glu-158 is a DNA binding site. DNA-binding residues include Gly-231 and Asp-233. Asp-233 contacts Mg(2+). Positions 328 to 380 are disordered; sequence LKNARHTSTQGRLDSFFKVMSSPSVKRKEPPKGAKGSASKKAKMSGGKFKKPK. Positions 336–344 are interaction with PCNA; that stretch reads TQGRLDSFF. A compositionally biased stretch (basic residues) spans 365–380; the sequence is ASKKAKMSGGKFKKPK.

The protein belongs to the XPG/RAD2 endonuclease family. FEN1 subfamily. As to quaternary structure, interacts with PCNA. Three molecules of FEN1 bind to one PCNA trimer with each molecule binding to one PCNA monomer. PCNA stimulates the nuclease activity without altering cleavage specificity. It depends on Mg(2+) as a cofactor. Phosphorylated. Phosphorylation upon DNA damage induces relocalization to the nuclear plasma.

The protein localises to the nucleus. It localises to the nucleolus. It is found in the nucleoplasm. The protein resides in the mitochondrion. In terms of biological role, structure-specific nuclease with 5'-flap endonuclease and 5'-3' exonuclease activities involved in DNA replication and repair. During DNA replication, cleaves the 5'-overhanging flap structure that is generated by displacement synthesis when DNA polymerase encounters the 5'-end of a downstream Okazaki fragment. It enters the flap from the 5'-end and then tracks to cleave the flap base, leaving a nick for ligation. Also involved in the long patch base excision repair (LP-BER) pathway, by cleaving within the apurinic/apyrimidinic (AP) site-terminated flap. Acts as a genome stabilization factor that prevents flaps from equilibrating into structures that lead to duplications and deletions. Also possesses 5'-3' exonuclease activity on nicked or gapped double-stranded DNA, and exhibits RNase H activity. Also involved in replication and repair of rDNA and in repairing mitochondrial DNA. In Branchiostoma floridae (Florida lancelet), this protein is Flap endonuclease 1.